We begin with the raw amino-acid sequence, 291 residues long: Acidic endochitinase (291 aa).

The signal sequence occupies residues 1 to 22; that stretch reads MIKYSFLLTALVLFLRALKLEA. A GH18 domain is found at 23–291; the sequence is GDIVIYWGQN…GYSSAIKANV (269 aa). Cystine bridges form between cysteine 42-cysteine 89 and cysteine 72-cysteine 79. Glutamate 149 serves as the catalytic Proton donor. Cysteine 180 and cysteine 209 are disulfide-bonded.

It belongs to the glycosyl hydrolase 18 family. Chitinase class II subfamily.

Its subcellular location is the secreted. The protein localises to the cell wall. It catalyses the reaction Random endo-hydrolysis of N-acetyl-beta-D-glucosaminide (1-&gt;4)-beta-linkages in chitin and chitodextrins.. Its function is as follows. This protein functions as a defense against chitin containing fungal pathogens. The protein is Acidic endochitinase of Nicotiana tabacum (Common tobacco).